The sequence spans 89 residues: Small ribosomal subunit protein bS20 (89 aa).

Basic residues predominate over residues 1 to 12 (MANIKSAKKRVK). The interval 1-20 (MANIKSAKKRVKQTVVRNER) is disordered.

It belongs to the bacterial ribosomal protein bS20 family.

Functionally, binds directly to 16S ribosomal RNA. The sequence is that of Small ribosomal subunit protein bS20 from Xylella fastidiosa (strain 9a5c).